The following is a 279-amino-acid chain: Tryptophan 2,3-dioxygenase (279 aa).

Residues 48 to 52 (FIVIH), Tyr110, and Arg114 contribute to the substrate site. His237 is a binding site for heme. Thr251 contacts substrate.

Belongs to the tryptophan 2,3-dioxygenase family. In terms of assembly, homotetramer. Heme serves as cofactor.

It carries out the reaction L-tryptophan + O2 = N-formyl-L-kynurenine. The protein operates within amino-acid degradation; L-tryptophan degradation via kynurenine pathway; L-kynurenine from L-tryptophan: step 1/2. Heme-dependent dioxygenase that catalyzes the oxidative cleavage of the L-tryptophan (L-Trp) pyrrole ring and converts L-tryptophan to N-formyl-L-kynurenine. Catalyzes the oxidative cleavage of the indole moiety. The polypeptide is Tryptophan 2,3-dioxygenase (Exiguobacterium sibiricum (strain DSM 17290 / CCUG 55495 / CIP 109462 / JCM 13490 / 255-15)).